Reading from the N-terminus, the 202-residue chain is Translation initiation factor 2 subunit beta (202 aa).

In terms of domain architecture, TRAM spans 145–202 (AIEEGGTYELRIDAVGSKGDGIAKIDKYTVFVPGATKGDVVKVKIKKISGNLAFSERA).

The protein belongs to the eIF-2-beta/eIF-5 family. In terms of assembly, heterotrimer composed of an alpha, a beta and a gamma chain.

In terms of biological role, eIF-2 functions in the early steps of protein synthesis by forming a ternary complex with GTP and initiator tRNA. This chain is Translation initiation factor 2 subunit beta (eif2b), found in Methanosarcina mazei (strain ATCC BAA-159 / DSM 3647 / Goe1 / Go1 / JCM 11833 / OCM 88) (Methanosarcina frisia).